Reading from the N-terminus, the 584-residue chain is Zinc finger and BTB domain-containing protein 7A (584 aa).

The 68-residue stretch at 34–101 folds into the BTB domain; the sequence is CDVVILVEGR…AYTATLTVST (68 aa). The interval 220 to 313 is disordered; that stretch reads YGPGPPAERP…EDGDGPDVDG (94 aa). Residues 277–584 form a mediates interaction with KHDRBS1 region; it reads EEEAASLSEA…TDGNFTAGLA (308 aa). Residues 281–290 are compositionally biased toward low complexity; that stretch reads ASLSEAAPEP. Phosphoserine occurs at positions 337 and 341. A mediates interaction with RELA region spans residues 349 to 584; that stretch reads MDYYLKYFSG…TDGNFTAGLA (236 aa). The interval 377 to 584 is mediates interaction with SMAD4; sequence RAKAFQKCPI…TDGNFTAGLA (208 aa). 2 consecutive C2H2-type zinc fingers follow at residues 382–404 and 410–432; these read QKCP…IRTH and YECN…MRKH. Residue Lys436 forms a Glycyl lysine isopeptide (Lys-Gly) (interchain with G-Cter in SUMO2) linkage. The C2H2-type 3 zinc finger occupies 438-460; that stretch reads YLCQQCGAAFAHNYDLKNHMRVH. The C2H2-type 4; atypical zinc-finger motif lies at 466-490; sequence YQCDSCCKTFVRSDHLHRHLKKDGC. Positions 486-584 are disordered; the sequence is KKDGCNGVPS…TDGNFTAGLA (99 aa). Low complexity predominate over residues 505 to 527; sequence GGAPDPSPGATATPGAPAQPSSP. Residues Ser511, Ser525, and Ser526 each carry the phosphoserine modification. Positions 528–540 are enriched in basic and acidic residues; that stretch reads DARRNGQEKHFKD. Lys539 participates in a covalent cross-link: Glycyl lysine isopeptide (Lys-Gly) (interchain with G-Cter in SUMO2). At Ser549 the chain carries Phosphoserine. Positions 560–572 are enriched in gly residues; sequence GAGGGGDSGGGPG.

Homodimer. Interacts with BCL6. Interacts with RELA; involved in the control by RELA of the accessibility of target gene promoters. Interacts with AR (via NR LBD domain); the interaction is direct and androgen-dependent. Interacts with NCOR1. Interacts with NCOR2. Interacts with SMAD4; the interaction is direct and stimulated by TGFB1. Interacts with HDAC1. Interacts with SP1; ZBTB7A prevents the binding to GC-rich motifs in promoters and represses the transcriptional activity of SP1. Interacts with the DNA-dependent protein kinase complex/DNA-PKc. Interacts with KHDRBS1; negatively regulates KHDRBS1 splicing activity. In terms of processing, sumoylated. Undergoes sumoylation with SUMO1 that may regulate its transcriptional activity. Widely expressed. In normal thymus, expressed in medullary epithelial cells and Hassle's corpuscles (at protein level). In tonsil, expressed in squamous epithelium and germinal center lymphocytes (at protein level). Up-regulated in a subset of lymphomas, as well as in a subset of breast, lung, colon, prostate and bladder carcinomas (at protein level). Expressed in adipose tissues.

It is found in the nucleus. In terms of biological role, transcription factor that represses the transcription of a wide range of genes involved in cell proliferation and differentiation. Directly and specifically binds to the consensus sequence 5'-[GA][CA]GACCCCCCCCC-3' and represses transcription both by regulating the organization of chromatin and through the direct recruitment of transcription factors to gene regulatory regions. Negatively regulates SMAD4 transcriptional activity in the TGF-beta signaling pathway through these two mechanisms. That is, recruits the chromatin regulator HDAC1 to the SMAD4-DNA complex and in parallel prevents the recruitment of the transcriptional activators CREBBP and EP300. Collaborates with transcription factors like RELA to modify the accessibility of gene transcription regulatory regions to secondary transcription factors. Also directly interacts with transcription factors like SP1 to prevent their binding to DNA. Functions as an androgen receptor/AR transcriptional corepressor by recruiting NCOR1 and NCOR2 to the androgen response elements/ARE on target genes. Thereby, negatively regulates androgen receptor signaling and androgen-induced cell proliferation. Involved in the switch between fetal and adult globin expression during erythroid cells maturation. Through its interaction with the NuRD complex regulates chromatin at the fetal globin genes to repress their transcription. Specifically represses the transcription of the tumor suppressor ARF isoform from the CDKN2A gene. Efficiently abrogates E2F1-dependent CDKN2A transactivation. Regulates chondrogenesis through the transcriptional repression of specific genes via a mechanism that also requires histone deacetylation. Regulates cell proliferation through the transcriptional regulation of genes involved in glycolysis. Involved in adipogenesis through the regulation of genes involved in adipocyte differentiation. Plays a key role in the differentiation of lymphoid progenitors into B and T lineages. Promotes differentiation towards the B lineage by inhibiting the T-cell instructive Notch signaling pathway through the specific transcriptional repression of Notch downstream target genes. Also regulates osteoclast differentiation. May also play a role, independently of its transcriptional activity, in double-strand break repair via classical non-homologous end joining/cNHEJ. Recruited to double-strand break sites on damage DNA, interacts with the DNA-dependent protein kinase complex and directly regulates its stability and activity in DNA repair. May also modulate the splicing activity of KHDRBS1 toward BCL2L1 in a mechanism which is histone deacetylase-dependent and thereby negatively regulates the pro-apoptotic effect of KHDRBS1. This chain is Zinc finger and BTB domain-containing protein 7A, found in Homo sapiens (Human).